The sequence spans 194 residues: Peptidyl-tRNA hydrolase (194 aa).

Y16 contributes to the tRNA binding site. H21 functions as the Proton acceptor in the catalytic mechanism. Residues F67, N69, and N115 each contribute to the tRNA site.

It belongs to the PTH family. As to quaternary structure, monomer.

The protein localises to the cytoplasm. The enzyme catalyses an N-acyl-L-alpha-aminoacyl-tRNA + H2O = an N-acyl-L-amino acid + a tRNA + H(+). Functionally, hydrolyzes ribosome-free peptidyl-tRNAs (with 1 or more amino acids incorporated), which drop off the ribosome during protein synthesis, or as a result of ribosome stalling. Its function is as follows. Catalyzes the release of premature peptidyl moieties from peptidyl-tRNA molecules trapped in stalled 50S ribosomal subunits, and thus maintains levels of free tRNAs and 50S ribosomes. This chain is Peptidyl-tRNA hydrolase, found in Salmonella agona (strain SL483).